We begin with the raw amino-acid sequence, 262 residues long: MSERESWHKEIDLFLVAMGYFTRIPMPKWVEVDSDKLNKASRYFGLVGLLIGLLSAIVFWLTQNWLPAGVSVLLAMLVGVLLTGGFHEDGLADTFDGFGGGWTAEDKLRIMKDSRLGSYGAIALILALLLKWQLLVELALYDPVVAGSALIVAHTVSRVVAASIIFTEKYVRDDETSKSKPLSQHQGINELFILVASGVLVLLFLKGLAALSLLLVMIGLRRLIVVIFRRQIGGYTGDTLGAAQQICEIVCYLVLLIVGSIL.

6 helical membrane passes run 43–63, 66–86, 120–140, 146–166, 191–211, and 242–262; these read YFGLVGLLIGLLSAIVFWLTQ, LPAGVSVLLAMLVGVLLTGGF, GAIALILALLLKWQLLVELAL, AGSALIVAHTVSRVVAASIIF, LFILVASGVLVLLFLKGLAAL, and AAQQICEIVCYLVLLIVGSIL.

Belongs to the CobS family. Mg(2+) is required as a cofactor.

It localises to the cell inner membrane. It catalyses the reaction alpha-ribazole + adenosylcob(III)inamide-GDP = adenosylcob(III)alamin + GMP + H(+). The catalysed reaction is alpha-ribazole 5'-phosphate + adenosylcob(III)inamide-GDP = adenosylcob(III)alamin 5'-phosphate + GMP + H(+). It functions in the pathway cofactor biosynthesis; adenosylcobalamin biosynthesis; adenosylcobalamin from cob(II)yrinate a,c-diamide: step 7/7. Its function is as follows. Joins adenosylcobinamide-GDP and alpha-ribazole to generate adenosylcobalamin (Ado-cobalamin). Also synthesizes adenosylcobalamin 5'-phosphate from adenosylcobinamide-GDP and alpha-ribazole 5'-phosphate. The sequence is that of Adenosylcobinamide-GDP ribazoletransferase from Shewanella putrefaciens (strain CN-32 / ATCC BAA-453).